A 114-amino-acid chain; its full sequence is MISIMMKVSLAVFMLAGGIIKVSRVPFQVEHWRHYQYPLWFLTVTGILEIAGALAMTAGIWNRYAAIGAGVLFVVLMAGAIHAHMFRARQSVIMAIQAMICLIVSIMIIMGSYT.

3 helical membrane-spanning segments follow: residues 38–60, 64–86, and 91–113; these read PLWF…TAGI, YAAI…AHMF, and SVIM…MGSY.

The protein localises to the cell membrane. This is an uncharacterized protein from Bacillus subtilis (strain 168).